The following is a 152-amino-acid chain: Ribonuclease H (152 aa).

In terms of domain architecture, RNase H type-1 spans Met-1–Glu-142. Residues Asp-10, Glu-48, Asp-70, and Asp-134 each coordinate Mg(2+).

It belongs to the RNase H family. In terms of assembly, monomer. Mg(2+) serves as cofactor.

Its subcellular location is the cytoplasm. It catalyses the reaction Endonucleolytic cleavage to 5'-phosphomonoester.. Its function is as follows. Endonuclease that specifically degrades the RNA of RNA-DNA hybrids. The polypeptide is Ribonuclease H (Rickettsia massiliae (strain Mtu5)).